We begin with the raw amino-acid sequence, 160 residues long: Regulatory protein RecX (160 aa).

The protein belongs to the RecX family.

It localises to the cytoplasm. Modulates RecA activity. This is Regulatory protein RecX from Pelodictyon phaeoclathratiforme (strain DSM 5477 / BU-1).